Reading from the N-terminus, the 92-residue chain is MPKLEMMLLVLLILPLPYFDAAGGQAVQGDGHGDGMDRYLQRDDREARITCQPRGRSKWGRCCLTQMCGNYCCYKHGCRCVYHSWRGHGCSC.

The signal sequence occupies residues 1 to 24 (MPKLEMMLLVLLILPLPYFDAAGG). A propeptide spanning residues 25 to 45 (QAVQGDGHGDGMDRYLQRDDR) is cleaved from the precursor. Intrachain disulfides connect Cys-63-Cys-72, Cys-68-Cys-80, Cys-73-Cys-90, and Cys-78-Cys-92.

It belongs to the conotoxin D superfamily. In terms of assembly, homodimer; disulfide-linked. The homodimer contains 10 disulfide bonds. As to expression, expressed by the venom duct.

The protein resides in the secreted. Functionally, alpha-conotoxins act on postsynaptic membranes, they bind to the nicotinic acetylcholine receptors (nAChR) and thus inhibit them. Through its two C-terminal domains, this homodimeric protein would bind to two nAChR allosteric sites, located outside the nAChR C-loop of the principal binding face and at the adjacent binding interface in a clockwise direction. Component 4b which seems to correspond to this toxin blocks both neuronal and muscular subtypes: human alpha-7/CHRNA7 (IC(50)=125 nM), human alpha-3-beta-2 (CHRNA3-CHRNB2) (IC(50)=282 nM), human alpha-4-beta-2 (CHRNA4-CHRNB2) (IC(50)=697 nM), mouse adult muscular subtype alpha-1-beta-1-delta-epsilon (CHRNA1-CHRNB1-CHRND-CHRNE) (IC(50)=351 nM), and mouse fetal muscular subtype alpha-1-beta-1-gamma-delta (CHRNA1-CHRNB1-CHRNG-CHRND) (IC(50)=447 nM). It shows different dissociation rates towards the different subtypes, with a very slow rate towards alpha-7 subtype (almost irreversible), followed by the adult muscular subtype, the fetal muscular subtype, alpha-3-beta-2 and alpha-4-beta-2 (almost entirely reversible within a few minutes of washing). The protein is Alpha-conotoxin FrXXA 2 of Conus fergusoni (Ferguson's cone).